Reading from the N-terminus, the 541-residue chain is Membrane protein insertase YidC (541 aa).

A helical membrane pass occupies residues 6 to 26; that stretch reads SLLVLALIFISFLVYQQWQLD. The interval 34–56 is disordered; sequence EQTTSITATSDVPASSPSNSQAI. 4 helical membrane passes run 337-357, 416-436, 454-474, and 495-515; these read FWLL…IICV, LGGC…YWTF, LSAQ…MFLL, and PLIF…YWLV.

Belongs to the OXA1/ALB3/YidC family. Type 1 subfamily. In terms of assembly, interacts with the Sec translocase complex via SecD. Specifically interacts with transmembrane segments of nascent integral membrane proteins during membrane integration.

It localises to the cell inner membrane. Required for the insertion and/or proper folding and/or complex formation of integral membrane proteins into the membrane. Involved in integration of membrane proteins that insert both dependently and independently of the Sec translocase complex, as well as at least some lipoproteins. Aids folding of multispanning membrane proteins. This is Membrane protein insertase YidC from Haemophilus influenzae (strain PittEE).